Here is a 925-residue protein sequence, read N- to C-terminus: Protein translocase subunit SecA (925 aa).

ATP-binding positions include Gln87, 105–109 (GEGKT), and Asp515. Cys909, Cys911, Cys920, and His921 together coordinate Zn(2+).

The protein belongs to the SecA family. Monomer and homodimer. Part of the essential Sec protein translocation apparatus which comprises SecA, SecYEG and auxiliary proteins SecDF-YajC and YidC. The cofactor is Zn(2+).

It localises to the cell inner membrane. The protein localises to the cytoplasm. The enzyme catalyses ATP + H2O + cellular proteinSide 1 = ADP + phosphate + cellular proteinSide 2.. Functionally, part of the Sec protein translocase complex. Interacts with the SecYEG preprotein conducting channel. Has a central role in coupling the hydrolysis of ATP to the transfer of proteins into and across the cell membrane, serving both as a receptor for the preprotein-SecB complex and as an ATP-driven molecular motor driving the stepwise translocation of polypeptide chains across the membrane. This Cupriavidus necator (strain ATCC 17699 / DSM 428 / KCTC 22496 / NCIMB 10442 / H16 / Stanier 337) (Ralstonia eutropha) protein is Protein translocase subunit SecA.